We begin with the raw amino-acid sequence, 307 residues long: Actin maturation protease (307 aa).

A disordered region spans residues Met1–Lys34. The segment covering Ala9–Pro24 has biased composition (pro residues). Positions Ser80–Gly200 are peptidase C39-like. Residue Cys88 is part of the active site.

Belongs to the ACTMAP family.

Its subcellular location is the cytoplasm. The enzyme catalyses N-terminal N(alpha)-acetyl-L-methionyl-L-aspartyl-[protein] + H2O = N-terminal L-aspartyl-[protein] + N-acetyl-L-methionine. It carries out the reaction N-terminal N(alpha)-acetyl-L-methionyl-L-glutamyl-[protein] + H2O = N-terminal L-glutamyl-[protein] + N-acetyl-L-methionine. It catalyses the reaction N-terminal N(alpha)-acetyl-L-cysteinyl-L-aspartyl-[protein] + H2O = N-terminal L-aspartyl-[protein] + N-acetyl-L-cysteine. The catalysed reaction is N-terminal N(alpha)-acetyl-L-cysteinyl-L-glutamyl-[protein] + H2O = N-terminal L-glutamyl-[protein] + N-acetyl-L-cysteine. Functionally, actin maturation protease that specifically mediates the cleavage of immature acetylated N-terminal actin, thereby contributing to actin maturation. Cleaves N-terminal acetylated methionine of immature cytoplasmic actin after translation. Cleaves N-terminal acetylated cysteine of muscle actin after canonical removal of N-terminal methionine. The chain is Actin maturation protease from Danio rerio (Zebrafish).